The sequence spans 61 residues: Large ribosomal subunit protein uL30 (61 aa).

It belongs to the universal ribosomal protein uL30 family. Part of the 50S ribosomal subunit.

The polypeptide is Large ribosomal subunit protein uL30 (Francisella tularensis subsp. tularensis (strain FSC 198)).